The following is a 1096-amino-acid chain: Cohesin subunit scc-3 (1096 aa).

Residues 1–21 (MSETPTDQSPQRMSTRNQARV) are compositionally biased toward polar residues. Disordered regions lie at residues 1 to 53 (MSET…KKRA) and 67 to 106 (NLNN…ESAE). The stretch at 261–312 (IELTQSKEKTSKQIEAEKAKLKNNSAGNEKYEALVAQRTQTEERAEEIRQII) forms a coiled coil. The 86-residue stretch at 320–405 (FVHRYRDVVP…NKFKDRLVSM (86 aa)) folds into the SCD domain. Residues 1057–1096 (DNMSVRSGMTVTSNATMRSTASSTRGRGRGRGRSRIADDF) form a disordered region. A compositionally biased stretch (polar residues) spans 1060 to 1073 (SVRSGMTVTSNATM).

This sequence belongs to the SCC3 family. As to quaternary structure, component of the cohesin complex, composed of the smc-1 and smc-3 heterodimer attached via their hinge domain, scc-1 which links them, and scc-3. Interacts with scc-1, smc-1 and tim-1. In terms of tissue distribution, expressed in gonadal cells.

The protein localises to the nucleus. It is found in the chromosome. Its function is as follows. Component of the cohesin complex, a complex required for the cohesion of sister chromatids after DNA replication. The cohesin complex apparently forms a large proteinaceous ring within which sister chromatids can be trapped. At anaphase, the scc-1 subunit of the complex is cleaved and dissociates from chromatin, allowing sister chromatids to segregate. The cohesin complex may also play a role in spindle pole assembly during mitosis. Plays an essential role in cell division during embryonic development. Required for the assembly of the synaptonemal complex between homologous chromosomes to promote sister chromatid cohesion during mitosis and meiosis. Has a role in stabilization of homologous chromosome associations during meiotic synapsis. Required for chromosome segregation during mitosis and meiosis. Plays a role in DNA double-strand break (DSB) repair during meiotic recombination and promotes the assembly of the 9-1-1 cell-cycle checkpoint response complex which is required for inducing apoptosis in response to DNA damage, at DNA damage sites. The polypeptide is Cohesin subunit scc-3 (Caenorhabditis elegans).